The following is a 103-amino-acid chain: Protein IQ-DOMAIN 20 (103 aa).

The calmodulin-binding stretch occupies residues 10-22; that stretch reads VVRRKLLRRSQSR. IQ domains lie at 36–62 and 63–87; these read EEIAAVKIQAFFRGHLARRAFKALKSL and VKLQAVARGVLVRRQARIALHCMHA.

Belongs to the IQD family. Interacts with calmodulin (CaM and CML) at the plasma membrane in a calcium ion Ca(2+)- independent manner, however, Ca(2+) seems to modulate calmodulin binding. Binds to multiple calmodulin (CaM) in the presence of Ca(2+) and CaM-like proteins.

The protein localises to the nucleus. It localises to the nucleolus. The protein resides in the cell membrane. Its function is as follows. May be involved in cooperative interactions with calmodulins or calmodulin-like proteins. Recruits calmodulin proteins to microtubules, thus being a potential scaffold in cellular signaling and trafficking. May associate with nucleic acids and regulate gene expression at the transcriptional or post-transcriptional level. The chain is Protein IQ-DOMAIN 20 from Arabidopsis thaliana (Mouse-ear cress).